Here is a 747-residue protein sequence, read N- to C-terminus: Kinesin-like protein KIF3B (747 aa).

Methionine 1 is modified (N-acetylmethionine). Serine 2 is modified (N-acetylserine; in Kinesin-like protein KIF3B, N-terminally processed). In terms of domain architecture, Kinesin motor spans 9-340 (SVRVVVRCRP…LRYANRAKNI (332 aa)). 96 to 103 (GQTGTGKT) contributes to the ATP binding site. A coiled-coil region spans residues 346–579 (VNEDPKDALL…EQTQNELTRE (234 aa)). Disordered stretches follow at residues 374–412 (IGRR…DKDD) and 699–747 (QVDA…LVPK). Acidic residues predominate over residues 393–411 (GEEEEEEGEEGEEEGDDKD). Residues 580 to 747 (LKLKHLIIEN…YPQSRGLVPK (168 aa)) form a globular region. Residues 701 to 710 (DASSFESTAN) are compositionally biased toward polar residues. The segment covering 711 to 721 (KKSKARPKSGR) has biased composition (basic residues). Residues 722–735 (KSGSSSSSSGTPAS) are compositionally biased toward low complexity.

Belongs to the TRAFAC class myosin-kinesin ATPase superfamily. Kinesin family. Kinesin II subfamily. Heterodimer of KIF3A and KIF3B. KIF3A/KIF3B heterodimer interacts with KIFAP3 forming a heterotrimeric (KIF3A/KIF3B/KIFAP3) complex. Interacts directly with IFT20. Interacts with the SMC3 subunit of the cohesin complex. Interacts with FLCN.

Its subcellular location is the cytoplasm. It localises to the cytoskeleton. It is found in the cell projection. The protein resides in the cilium. The protein localises to the dendritic spine. In terms of biological role, microtubule-based molecular motor that transport intracellular cargos, such as vesicles, organelles and protein complexes. Uses ATP hydrolysis to generate force to bind and move along the microtubule. Plays a role in cilia formation. Involved in photoreceptor integrity and opsin trafficking in rod photoreceptors. Transports vesicles containing N-methyl-D-aspartate (NMDA) receptor subunit GRIN2A into neuronal dendrites. The sequence is that of Kinesin-like protein KIF3B (KIF3B) from Homo sapiens (Human).